Reading from the N-terminus, the 1840-residue chain is Collagen alpha-1(V) chain (1840 aa).

A signal peptide spans Met-1 to Ala-36. In terms of domain architecture, Laminin G-like spans Asp-72–Cys-244. The tract at residues Arg-231 to Glu-445 is nonhelical region. 6 positions are modified to sulfotyrosine: Tyr-234, Tyr-236, Tyr-240, Tyr-262, Tyr-263, and Tyr-271. Disordered regions lie at residues Pro-242 to Met-523, Phe-528 to Gln-547, and Gly-561 to Gln-1576. Over residues Asn-258–Gly-268 the composition is skewed to acidic residues. Composition is skewed to low complexity over residues Asp-335–Asp-352 and Thr-376–Asn-386. Positions Gly-446–Arg-560 are interrupted collagenous region. The segment covering Pro-472–Thr-487 has biased composition (pro residues). Residues Leu-508 to Met-523 show a composition bias toward low complexity. The segment covering Gly-561–Pro-572 has biased composition (low complexity). The interval Gly-561 to Gly-1572 is triple-helical region. Residues Pro-572, Pro-578, and Pro-623 each carry the 4-hydroxyproline modification. Lys-629 carries the 5-hydroxylysine modification. Residue Pro-641 is modified to 4-hydroxyproline. Position 644 is a 5-hydroxylysine (Lys-644). A 4-hydroxyproline mark is found at Pro-650, Pro-656, Pro-659, Pro-677, and Pro-680. Over residues Pro-673 to Pro-688 the composition is skewed to low complexity. 3-hydroxyproline occurs at positions 682 and 688. Residues Lys-689–Pro-698 are compositionally biased toward pro residues. Residues Pro-692, Pro-698, and Pro-707 each carry the 4-hydroxyproline modification. At Lys-710 the chain carries 5-hydroxylysine. 4-hydroxyproline is present on residues Pro-719, Pro-722, Pro-728, and Pro-734. A compositionally biased stretch (low complexity) spans Gln-724–Pro-743. 5-hydroxylysine is present on Lys-746. The segment covering Leu-749–Pro-758 has biased composition (low complexity). 5 positions are modified to 4-hydroxyproline: Pro-752, Pro-758, Pro-764, Pro-767, and Pro-773. Lys-776 carries the post-translational modification 5-hydroxylysine. 4-hydroxyproline occurs at positions 782 and 791. 4 positions are modified to 5-hydroxylysine: Lys-797, Lys-806, Lys-809, and Lys-812. Pro-818 is subject to 4-hydroxyproline. Residue Lys-821 is modified to 5-hydroxylysine. Residue Pro-836 is modified to 4-hydroxyproline. Residues Arg-839–Lys-848 are compositionally biased toward basic and acidic residues. 2 positions are modified to 5-hydroxylysine: Lys-848 and Lys-866. Pro-872, Pro-875, and Pro-878 each carry 4-hydroxyproline. Lys-884 carries the 5-hydroxylysine modification. 4-hydroxyproline occurs at positions 890 and 893. Lys-899 carries the post-translational modification 5-hydroxylysine. A 4-hydroxyproline mark is found at Pro-905 and Pro-908. Residues Pro-910–Pro-919 show a composition bias toward low complexity. 4-hydroxyproline occurs at positions 932 and 947. 2 stretches are compositionally biased toward low complexity: residues Lys-973–Thr-992 and Val-1001–Met-1013. 4-hydroxyproline is present on residues Pro-1019, Pro-1022, Pro-1025, and Pro-1031. The segment covering Ser-1090–Pro-1106 has biased composition (low complexity). A compositionally biased stretch (pro residues) spans Arg-1108 to Pro-1117. A 4-hydroxyproline mark is found at Pro-1223 and Pro-1226. The segment covering Pro-1261–Pro-1270 has biased composition (low complexity). Residues Gly-1296–Gly-1305 show a composition bias toward gly residues. Composition is skewed to pro residues over residues Thr-1382–Ala-1400 and Ser-1456–Leu-1471. Residues Pro-1469 and Pro-1472 each carry the 4-hydroxyproline modification. The span at Pro-1487 to Pro-1496 shows a compositional bias: low complexity. A compositionally biased stretch (pro residues) spans Pro-1528 to Pro-1543. Residues Lys-1544–Lys-1556 show a composition bias toward low complexity. A nonhelical region region spans residues Glu-1573 to Ala-1607. A sulfotyrosine mark is found at Tyr-1603 and Tyr-1606. Residues Glu-1611–Leu-1839 enclose the Fibrillar collagen NC1 domain.

The protein belongs to the fibrillar collagen family. Trimers of two alpha 1(V) and one alpha 2(V) chains in most tissues and trimers of one alpha 1(V), one alpha 2(V), and one alpha 3(V) chains in placenta. Interacts with CSPG4. In terms of processing, hydroxylation on proline residues within the sequence motif, GXPG, is most likely to be 4-hydroxy as this fits the requirement for 4-hydroxylation in vertebrates. Post-translationally, sulfated on 40% of tyrosines. In terms of tissue distribution, ubiquitously expressed.

It localises to the secreted. Its subcellular location is the extracellular space. It is found in the extracellular matrix. Its function is as follows. Type V collagen is a member of group I collagen (fibrillar forming collagen). It is a minor connective tissue component of nearly ubiquitous distribution. Type V collagen binds to DNA, heparan sulfate, thrombospondin, heparin, and insulin. The protein is Collagen alpha-1(V) chain (COL5A1) of Cricetulus longicaudatus (Long-tailed dwarf hamster).